The following is a 39-amino-acid chain: Natriuretic peptide CnNP-a (39 aa).

The propeptide occupies 1–8; it reads SGSKTAKI. An intrachain disulfide couples Cys-12 to Cys-28.

It belongs to the natriuretic peptide family. In terms of tissue distribution, expressed by the venom gland.

It is found in the secreted. Snake venom natriuretic peptide that targets both NPR1 and NPR2. Exhibits hypotensive and vasodepressor activities. The protein is Natriuretic peptide CnNP-a of Cryptophis nigrescens (Eastern small-eyed snake).